A 105-amino-acid chain; its full sequence is UPF0251 protein AF_0666 (105 aa).

Belongs to the UPF0251 family.

The polypeptide is UPF0251 protein AF_0666 (Archaeoglobus fulgidus (strain ATCC 49558 / DSM 4304 / JCM 9628 / NBRC 100126 / VC-16)).